The following is a 1238-amino-acid chain: Cryptic loci regulator protein 1 (1238 aa).

6 disordered regions span residues 133–156 (TQQQVSNVSHGNFKPNSSVNTEPN), 196–237 (PFSN…PSSI), 277–303 (ASLYDRSPSKKDITSSRNTSSYNLGSM), 546–568 (QKSVSSETTLVKPSSTSSYIDTT), 696–735 (SDNTDCSLPKPSNSKLSSISSDGDASSNRMAVPDKSPFVH), and 784–824 (TLKE…QSRS). A compositionally biased stretch (polar residues) spans 214–223 (NVKNNSKKTA). Positions 224 to 237 (SSVNSNHSSIPSSI) are enriched in low complexity. Residues 291 to 303 (SSRNTSSYNLGSM) show a composition bias toward polar residues. A compositionally biased stretch (low complexity) spans 702–723 (SLPKPSNSKLSSISSDGDASSN). Residues 785 to 796 (LKEDASSTKQAK) show a composition bias toward basic and acidic residues. Polar residues predominate over residues 810 to 819 (NDVSKNNSGE). Residues 1062–1087 (LNCEVSNCKKCFSNYEDMFKHLQHSH) form a C2H2-type zinc finger.

In terms of assembly, interacts with clr3.

It is found in the nucleus. Its subcellular location is the chromosome. The protein localises to the centromere. It localises to the telomere. Its function is as follows. Regulates silencing of the mat2 and mat3 loci. Organizes the chromatin structure of the mating-type region where it also participates in establishing the 'cold spot' for recombination. Required for proper positioning of nucleosomes at heterochromatic loci and for transcriptional gene silencing (TGS) function of the Snf2/Hdac-containing repressor complex (SHREC). This Schizosaccharomyces pombe (strain 972 / ATCC 24843) (Fission yeast) protein is Cryptic loci regulator protein 1 (clr1).